Reading from the N-terminus, the 365-residue chain is Aminomethyltransferase (365 aa).

It belongs to the GcvT family. In terms of assembly, the glycine cleavage system is composed of four proteins: P, T, L and H.

The enzyme catalyses N(6)-[(R)-S(8)-aminomethyldihydrolipoyl]-L-lysyl-[protein] + (6S)-5,6,7,8-tetrahydrofolate = N(6)-[(R)-dihydrolipoyl]-L-lysyl-[protein] + (6R)-5,10-methylene-5,6,7,8-tetrahydrofolate + NH4(+). The glycine cleavage system catalyzes the degradation of glycine. The sequence is that of Aminomethyltransferase from Chlorobium phaeovibrioides (strain DSM 265 / 1930) (Prosthecochloris vibrioformis (strain DSM 265)).